A 114-amino-acid polypeptide reads, in one-letter code: Macrophage migration inhibitory factor homolog (114 aa).

The Proton acceptor; via imino nitrogen role is filled by P2. 2 residues coordinate substrate: K33 and I65.

The protein belongs to the MIF family.

It is found in the secreted. The catalysed reaction is L-dopachrome = 5,6-dihydroxyindole-2-carboxylate. It carries out the reaction 3-phenylpyruvate = enol-phenylpyruvate. In terms of biological role, tautomerization of the methyl ester of L-dopachrome. Inhibits migration of human peripheral blood mononuclear cells. The polypeptide is Macrophage migration inhibitory factor homolog (Trichinella spiralis (Trichina worm)).